The primary structure comprises 462 residues: Golgi-associated PDZ and coiled-coil motif-containing protein (462 aa).

The stretch at 83 to 194 (KAQSVSQINH…EDEALRGHIA (112 aa)) forms a coiled coil. The 84-residue stretch at 288–371 (KVLLLKEDHE…EIEFEVVYVA (84 aa)) folds into the PDZ domain. A disordered region spans residues 427–449 (TDTHENGDLGTASETPLDDGASK).

Homooligomer. Interacts with FZD5. Interacts with FZD8. Interacts with GRID2 and BECN1. Interacts with CSPG5. Interacts with CLCN3. Interacts with STX6. Interacts with CFTR. Interacts with ASIC3. Interacts with GOLGA3. Interacts with NLGN1. Interacts with RHOQ. Interacts with MARCHF2; the interaction leads to CFTR ubiquitination and degradation. May interact with CACNG2. Interacts with CCDC62.

Its subcellular location is the cytoplasm. The protein localises to the golgi apparatus membrane. It localises to the golgi apparatus. It is found in the trans-Golgi network membrane. The protein resides in the synapse. Its subcellular location is the postsynaptic density. The protein localises to the cell projection. It localises to the dendrite. In terms of biological role, plays a role in intracellular protein trafficking and degradation. May regulate CFTR chloride currents and acid-induced ASIC3 currents by modulating cell surface expression of both channels. May also regulate the intracellular trafficking of the ADR1B receptor. May play a role in autophagy. Together with MARCHF2 mediates the ubiquitination and lysosomal degradation of CFTR. Overexpression results in CFTR intracellular retention and degradation in the lysosomes. The sequence is that of Golgi-associated PDZ and coiled-coil motif-containing protein (GOPC) from Pongo abelii (Sumatran orangutan).